The primary structure comprises 241 residues: Large ribosomal subunit protein uL3 (241 aa).

2 disordered regions span residues Val139–Gly164 and Asp215–Ala241. Gln151 is modified (N5-methylglutamine).

This sequence belongs to the universal ribosomal protein uL3 family. In terms of assembly, part of the 50S ribosomal subunit. Forms a cluster with proteins L14 and L19. Post-translationally, methylated by PrmB.

In terms of biological role, one of the primary rRNA binding proteins, it binds directly near the 3'-end of the 23S rRNA, where it nucleates assembly of the 50S subunit. This is Large ribosomal subunit protein uL3 from Rhodopseudomonas palustris (strain BisB5).